The sequence spans 545 residues: Phenylalanine--tRNA ligase beta subunit (545 aa).

The B5 domain occupies 268-343 (FLHKIQNVRE…MSIGYNNLEP (76 aa)). Residues Asp321, Asp327, Glu330, and Asp331 each coordinate Mg(2+).

Belongs to the phenylalanyl-tRNA synthetase beta subunit family. Type 2 subfamily. Tetramer of two alpha and two beta subunits. Requires Mg(2+) as cofactor.

Its subcellular location is the cytoplasm. It catalyses the reaction tRNA(Phe) + L-phenylalanine + ATP = L-phenylalanyl-tRNA(Phe) + AMP + diphosphate + H(+). The polypeptide is Phenylalanine--tRNA ligase beta subunit (Saccharolobus islandicus (strain L.S.2.15 / Lassen #1) (Sulfolobus islandicus)).